Here is a 261-residue protein sequence, read N- to C-terminus: 3-methyl-2-oxobutanoate hydroxymethyltransferase (261 aa).

Mg(2+) contacts are provided by Asp42 and Asp81. 3-methyl-2-oxobutanoate contacts are provided by residues 42–43 (DS), Asp81, and Lys110. A Mg(2+)-binding site is contributed by Glu112. Glu179 (proton acceptor) is an active-site residue.

Belongs to the PanB family. As to quaternary structure, homodecamer; pentamer of dimers. Requires Mg(2+) as cofactor.

It localises to the cytoplasm. It catalyses the reaction 3-methyl-2-oxobutanoate + (6R)-5,10-methylene-5,6,7,8-tetrahydrofolate + H2O = 2-dehydropantoate + (6S)-5,6,7,8-tetrahydrofolate. Its pathway is cofactor biosynthesis; coenzyme A biosynthesis. Functionally, catalyzes the reversible reaction in which hydroxymethyl group from 5,10-methylenetetrahydrofolate is transferred onto alpha-ketoisovalerate to form ketopantoate. This is 3-methyl-2-oxobutanoate hydroxymethyltransferase from Pyrobaculum islandicum (strain DSM 4184 / JCM 9189 / GEO3).